We begin with the raw amino-acid sequence, 236 residues long: Carboxymethylenebutenolidase (236 aa).

Catalysis depends on residues C123, D171, and H202.

Belongs to the dienelactone hydrolase family. In terms of assembly, monomer.

It carries out the reaction 2-(5-oxo-2,5-dihydrofuran-2-ylidene)acetate + H2O = 4-oxohex-2-enedioate + H(+). It participates in aromatic compound metabolism; 3-chlorocatechol degradation. In terms of biological role, ring cleavage of cyclic ester dienelactone to produce maleylacetate. The chain is Carboxymethylenebutenolidase (clcD) from Pseudomonas knackmussii (strain DSM 6978 / CCUG 54928 / LMG 23759 / B13).